Here is a 291-residue protein sequence, read N- to C-terminus: ATP synthase subunit a (291 aa).

The next 7 membrane-spanning stretches (helical) occupy residues 50 to 70 (LDSM…FWIV), 108 to 128 (IAPL…MDLI), 129 to 149 (PVDW…GMDP), 161 to 181 (DPNI…FYSI), 203 to 223 (PVAK…TFLA), 241 to 261 (LIFI…SVPW), and 262 to 282 (AIFH…LTIV).

The protein belongs to the ATPase A chain family. F-type ATPases have 2 components, CF(1) - the catalytic core - and CF(0) - the membrane proton channel. CF(1) has five subunits: alpha(3), beta(3), gamma(1), delta(1), epsilon(1). CF(0) has three main subunits: a(1), b(2) and c(9-12). The alpha and beta chains form an alternating ring which encloses part of the gamma chain. CF(1) is attached to CF(0) by a central stalk formed by the gamma and epsilon chains, while a peripheral stalk is formed by the delta and b chains.

The protein localises to the cell inner membrane. Functionally, key component of the proton channel; it plays a direct role in the translocation of protons across the membrane. This Acinetobacter baumannii (strain AB307-0294) protein is ATP synthase subunit a.